A 547-amino-acid chain; its full sequence is Solute carrier family 22 member 7 (547 aa).

Transmembrane regions (helical) follow at residues 21-41 (VALL…PIFL), 145-165 (ATST…GYLS), 173-193 (LLLV…ASVS), 203-223 (LTGT…LEWL), 233-253 (VLSS…GYLI), 258-278 (WLLL…WWVP), 345-365 (ISLC…GLSL), 374-396 (VYQT…YLSV), 403-423 (LTLA…LLVS), 431-451 (TALA…AYLF), 465-485 (MGLT…AALL), and 492-512 (LPKL…LLLP). Residues 521 to 547 (ETIQDVERKSAPSSLQEEEMPMKQVQD) are disordered.

The protein belongs to the major facilitator (TC 2.A.1) superfamily. Organic cation transporter (TC 2.A.1.19) family.

The protein localises to the basolateral cell membrane. The protein resides in the apical cell membrane. It is found in the cell membrane. The enzyme catalyses orotate(out) + L-glutamate(in) = orotate(in) + L-glutamate(out). It catalyses the reaction 3',5'-cyclic GMP(in) = 3',5'-cyclic GMP(out). The catalysed reaction is GMP(in) = GMP(out). It carries out the reaction 2'-deoxyguanosine(in) = 2'-deoxyguanosine(out). The enzyme catalyses GDP(in) = GDP(out). It catalyses the reaction guanosine(in) = guanosine(out). The catalysed reaction is GTP(in) = GTP(out). It carries out the reaction 3',5'-cyclic AMP(in) = 3',5'-cyclic AMP(out). The enzyme catalyses creatinine(in) = creatinine(out). It catalyses the reaction prostaglandin E2(out) = prostaglandin E2(in). The catalysed reaction is 2-oxoglutarate(in) = 2-oxoglutarate(out). It carries out the reaction glutarate(in) = glutarate(out). The enzyme catalyses urate(out) = urate(in). It catalyses the reaction estrone 3-sulfate(out) = estrone 3-sulfate(in). Functionally, functions as a Na(+)-independent bidirectional multispecific transporter. Contributes to the renal and hepatic elimination of endogenous organic compounds from the systemic circulation into the urine and bile, respectively. Capable of transporting a wide range of purine and pyrimidine nucleobases, nucleosides and nucleotides, with cGMP, 2'deoxyguanosine and GMP being the preferred substrates. Functions as a pH- and chloride-independent cGMP bidirectional facilitative transporter that can regulate both intracellular and extracellular levels of cGMP and may be involved in cGMP signaling pathways. Mediates orotate/glutamate bidirectional exchange and most likely display a physiological role in hepatic release of glutamate into the blood. Involved in renal secretion and possible reabsorption of creatinine. Able to uptake prostaglandin E2 (PGE2) and may contribute to PGE2 renal excretion. Also transports alpha-ketoglutarate and urate. Apart from the orotate/glutamate exchange, the counterions for the uptake of other SLC22A7/OAT2 substrates remain to be identified. The chain is Solute carrier family 22 member 7 (SLC22A7) from Sus scrofa (Pig).